A 318-amino-acid chain; its full sequence is O-glucosyltransferase LpsA (318 aa).

It belongs to the glycosyltransferase 90 family.

Its pathway is protein modification; protein glycosylation. Its function is as follows. Involved in lipopolysaccharide core biosynthesis. This Dichelobacter nodosus (Bacteroides nodosus) protein is O-glucosyltransferase LpsA (lpsA).